The following is a 344-amino-acid chain: L-rhamnose-proton symporter (344 aa).

Helical transmembrane passes span 4–24 (AITM…CFYA), 38–58 (WSVG…ALLL), 68–88 (FNLS…IGNI), 101–121 (MGIG…TPII), 137–157 (TLLG…AGQL), 175–195 (LLLA…MNAA), 214–234 (LPSY…FCFI), 259–279 (ILLS…YAWG), 290–310 (MSWM…GLVL), and 321–341 (VAVL…VGLG).

The protein belongs to the L-rhamnose transporter (TC 2.A.7.6) family.

It is found in the cell inner membrane. It catalyses the reaction L-rhamnopyranose(in) + H(+)(in) = L-rhamnopyranose(out) + H(+)(out). In terms of biological role, uptake of L-rhamnose across the cytoplasmic membrane with the concomitant transport of protons into the cell (symport system). This chain is L-rhamnose-proton symporter, found in Salmonella gallinarum (strain 287/91 / NCTC 13346).